A 417-amino-acid chain; its full sequence is Gamma-glutamyl phosphate reductase (417 aa).

This sequence belongs to the gamma-glutamyl phosphate reductase family.

The protein localises to the cytoplasm. It catalyses the reaction L-glutamate 5-semialdehyde + phosphate + NADP(+) = L-glutamyl 5-phosphate + NADPH + H(+). It participates in amino-acid biosynthesis; L-proline biosynthesis; L-glutamate 5-semialdehyde from L-glutamate: step 2/2. In terms of biological role, catalyzes the NADPH-dependent reduction of L-glutamate 5-phosphate into L-glutamate 5-semialdehyde and phosphate. The product spontaneously undergoes cyclization to form 1-pyrroline-5-carboxylate. The protein is Gamma-glutamyl phosphate reductase of Enterococcus faecalis (strain ATCC 700802 / V583).